The primary structure comprises 299 residues: Methionyl-tRNA formyltransferase (299 aa).

Residue 109–112 participates in (6S)-5,6,7,8-tetrahydrofolate binding; sequence SLLP.

The protein belongs to the Fmt family.

The catalysed reaction is L-methionyl-tRNA(fMet) + (6R)-10-formyltetrahydrofolate = N-formyl-L-methionyl-tRNA(fMet) + (6S)-5,6,7,8-tetrahydrofolate + H(+). In terms of biological role, attaches a formyl group to the free amino group of methionyl-tRNA(fMet). The formyl group appears to play a dual role in the initiator identity of N-formylmethionyl-tRNA by promoting its recognition by IF2 and preventing the misappropriation of this tRNA by the elongation apparatus. This Wolbachia sp. subsp. Drosophila simulans (strain wRi) protein is Methionyl-tRNA formyltransferase.